We begin with the raw amino-acid sequence, 396 residues long: E3 ubiquitin-protein transferase MAEA (396 aa).

Residues 1–124 are extracellular and involved in cell to cell contact; that stretch reads MAVQESAAQL…AAASVWKRKR (124 aa). Threonine 28 carries the post-translational modification Phosphothreonine. The LisH domain occupies 121–153; it reads KRKRMDRMMVEHLLRCGYYNTAVKLARQSGIED. The CTLH domain maps to 159-216; that stretch reads MFLTAKEVEESLERRETATCLAWCHDNKSRLRKMKSCLEFSLRIQEFIELIRQNKRLD. An RING-Gid-type zinc finger spans residues 314-381; that stretch reads CPVCSRSLNK…QDDKVVCPRT (68 aa).

In terms of assembly, identified in the CTLH complex that contains GID4, RANBP9 and/or RANBP10, MKLN1, MAEA, RMND5A (or alternatively its paralog RMND5B), GID8, ARMC8, WDR26 and YPEL5. Within this complex, MAEA, RMND5A (or alternatively its paralog RMND5B), GID8, WDR26, and RANBP9 and/or RANBP10 form the catalytic core, while GID4, MKLN1, ARMC8 and YPEL5 have ancillary roles. Interacts with F-actin. Post-translationally, autoubiquitinated as component of the CTLH E3 ubiquitin-protein ligase complex (in vitro).

The protein localises to the cytoplasm. The protein resides in the nucleus. It localises to the nucleoplasm. It is found in the nucleus matrix. Its subcellular location is the cell membrane. The protein localises to the cytoskeleton. The catalysed reaction is S-ubiquitinyl-[E2 ubiquitin-conjugating enzyme]-L-cysteine + [acceptor protein]-L-lysine = [E2 ubiquitin-conjugating enzyme]-L-cysteine + N(6)-ubiquitinyl-[acceptor protein]-L-lysine.. In terms of biological role, core component of the CTLH E3 ubiquitin-protein ligase complex that selectively accepts ubiquitin from UBE2H and mediates ubiquitination and subsequent proteasomal degradation of the transcription factor HBP1. MAEA and RMND5A are both required for catalytic activity of the CTLH E3 ubiquitin-protein ligase complex. MAEA is required for normal cell proliferation. The CTLH E3 ubiquitin-protein ligase complex is not required for the degradation of enzymes involved in gluconeogenesis, such as FBP1. Plays a role in erythroblast enucleation during erythrocyte maturation and in the development of mature macrophages. Mediates the attachment of erythroid cell to mature macrophages; this MAEA-mediated contact inhibits erythroid cell apoptosis. Participates in erythroblastic island formation, which is the functional unit of definitive erythropoiesis. Associates with F-actin to regulate actin distribution in erythroblasts and macrophages. May contribute to nuclear architecture and cells division events. The polypeptide is E3 ubiquitin-protein transferase MAEA (MAEA) (Pongo abelii (Sumatran orangutan)).